The chain runs to 556 residues: Protein trichome birefringence-like 1 (556 aa).

Residues 38-58 (TFVYAFVVTFVALTVFLAFSP) form a helical; Signal-anchor for type II membrane protein membrane-spanning segment. A GDS motif motif is present at residues 269 to 271 (GDS). Residues 514–528 (DCSHWCLPGVPDSWN) carry the DCXHWCLPGXXDXWN motif motif.

The protein belongs to the PC-esterase family. TBL subfamily. As to expression, not expressed in trichomes.

It is found in the membrane. Functionally, can complement TBR and is therefore functionally equivalent, but may work in different tissue. May act as a bridging protein that binds pectin and other cell wall polysaccharides. Probably involved in maintaining esterification of pectins. May be involved in the specific O-acetylation of cell wall polymers. The sequence is that of Protein trichome birefringence-like 1 (TBL1) from Arabidopsis thaliana (Mouse-ear cress).